The chain runs to 228 residues: Putative NAC domain-containing protein 61 (228 aa).

In terms of domain architecture, NAC spans 5-156; sequence LSVGFRFYPT…KSGSSRAFDR (152 aa). Disordered regions lie at residues 77-96 and 166-197; these read ARGGRPSRTTGSGYWKATGS and RNLPSNGVETSSRATISTSPETSHSGGNQVDL. Over residues 80–89 the composition is skewed to low complexity; sequence GRPSRTTGSG. Polar residues predominate over residues 168–193; the sequence is LPSNGVETSSRATISTSPETSHSGGN.

The protein resides in the nucleus. This is Putative NAC domain-containing protein 61 (NAC061) from Arabidopsis thaliana (Mouse-ear cress).